We begin with the raw amino-acid sequence, 883 residues long: Phosphoenolpyruvate carboxylase (883 aa).

Active-site residues include His138 and Lys546.

This sequence belongs to the PEPCase type 1 family. Mg(2+) serves as cofactor.

It catalyses the reaction oxaloacetate + phosphate = phosphoenolpyruvate + hydrogencarbonate. Forms oxaloacetate, a four-carbon dicarboxylic acid source for the tricarboxylic acid cycle. The chain is Phosphoenolpyruvate carboxylase from Escherichia coli O7:K1 (strain IAI39 / ExPEC).